Consider the following 467-residue polypeptide: ATP-dependent protease ATPase subunit HslU (467 aa).

Residues Val22 and 64–69 each bind ATP; that span reads GVGKTE. Residues 149–192 form a disordered region; sequence QTNNPLESLFGGAIPNFGQNNEDEEEPPTEEIKTKRSEIKRQLE. Basic and acidic residues predominate over residues 178–192; that stretch reads EEIKTKRSEIKRQLE. 3 residues coordinate ATP: Asp280, Glu345, and Arg417.

The protein belongs to the ClpX chaperone family. HslU subfamily. As to quaternary structure, a double ring-shaped homohexamer of HslV is capped on each side by a ring-shaped HslU homohexamer. The assembly of the HslU/HslV complex is dependent on binding of ATP.

The protein resides in the cytoplasm. Functionally, ATPase subunit of a proteasome-like degradation complex; this subunit has chaperone activity. The binding of ATP and its subsequent hydrolysis by HslU are essential for unfolding of protein substrates subsequently hydrolyzed by HslV. HslU recognizes the N-terminal part of its protein substrates and unfolds these before they are guided to HslV for hydrolysis. This is ATP-dependent protease ATPase subunit HslU from Staphylococcus aureus (strain bovine RF122 / ET3-1).